The primary structure comprises 98 residues: MSGEEEATVREPLDLIRLSLDERIYVKLRSDRELRGKLHAFDQHLNMILGDVEETITTVEIDDETYEEIVRTTKRTIEFLFVRGDGVILVSPPLRTAA.

Residue Ser-2 is modified to N-acetylserine. Residues 11 to 96 (EPLDLIRLSL…VILVSPPLRT (86 aa)) enclose the Sm domain.

This sequence belongs to the snRNP Sm proteins family. In terms of assembly, component of the heptameric LSM1-LSM7 complex that forms a seven-membered ring structure with a donut shape. The LSM subunits are arranged in the order LSM1, LSM2, LSM3, LSM6, LSM5, LSM7 and LSM4. Component of the heptameric LSM2-LSM8 complex that forms a seven-membered ring structure with a donut shape. The LSM subunits are arranged in the order LSM8, LSM2, LSM3, LSM6, LSM5, LSM7 and LSM4. LSM3B subunit interacts only with its two neighboring subunits, LSM2 and LSM6A or LSM6B. Expressed in roots, leaves, stems, flowers and siliques.

It is found in the cytoplasm. The protein resides in the nucleus. Its function is as follows. Component of LSM protein complexes, which are involved in RNA processing. Component of the cytoplasmic LSM1-LSM7 complex which is involved in mRNA degradation by promoting decapping and leading to accurate 5'-3' mRNA decay. The cytoplasmic LSM1-LSM7 complex regulates developmental gene expression by the decapping of specific development-related transcripts. Component of the nuclear LSM2-LSM8 complex which is involved splicing nuclear mRNAs. LSM2-LSM8 binds directly to the U6 small nuclear RNAs (snRNAs) and is essential for accurate splicing of selected development-related mRNAs through the stabilization of the spliceosomal U6 snRNA. Plays a critical role in the regulation of development-related gene expression. This chain is Sm-like protein LSM3B, found in Arabidopsis thaliana (Mouse-ear cress).